Reading from the N-terminus, the 97-residue chain is Putative CC-type chemokine U83 (97 aa).

Intrachain disulfides connect Cys32–Cys62 and Cys33–Cys76.

It belongs to the intercrine beta (chemokine CC) family. Highly divergent.

The chain is Putative CC-type chemokine U83 (U83) from Homo sapiens (Human).